Consider the following 148-residue polypeptide: Large ribosomal subunit protein bL9 (148 aa).

It belongs to the bacterial ribosomal protein bL9 family.

Binds to the 23S rRNA. This chain is Large ribosomal subunit protein bL9, found in Methylococcus capsulatus (strain ATCC 33009 / NCIMB 11132 / Bath).